The following is a 136-amino-acid chain: Urease subunit beta (136 aa).

A disordered region spans residues 112 to 136; sequence ENDEYAGVFGDNGTENVNKKGGKRS.

It belongs to the urease beta subunit family. As to quaternary structure, heterotrimer of UreA (gamma), UreB (beta) and UreC (alpha) subunits. Three heterotrimers associate to form the active enzyme.

The protein localises to the cytoplasm. The catalysed reaction is urea + 2 H2O + H(+) = hydrogencarbonate + 2 NH4(+). It participates in nitrogen metabolism; urea degradation; CO(2) and NH(3) from urea (urease route): step 1/1. This Staphylococcus aureus (strain MRSA252) protein is Urease subunit beta.